A 151-amino-acid chain; its full sequence is HTH-type transcriptional regulator FL11 (151 aa).

Positions 5 to 66 (LDDIDKKIIE…VVNPEALGYN (62 aa)) constitute an HTH asnC-type domain. The H-T-H motif DNA-binding region spans 24 to 43 (LREISKITGLAESTIHERIK). 98 to 104 (ETTGDYD) provides a ligand contact to L-arginine. Residues Asn-118, Asp-122, and 133–135 (THT) contribute to the L-lysine site. Residues Asp-122 and 133-135 (THT) each bind L-arginine.

Homodimer. Binds DNA as a dimer and an octamer.

With respect to regulation, in the famine mode, FL11 forms dimers and acts as a repressor, leading to growth arrest. In the feast mode, in the presence of high concentrations of lysine or arginine, four dimers assemble into an octamer and cover the fl11 and lysine biosynthesis promoters. This leads to the inhibition of fl11 expression and lysine biosynthesis, decrease of the FL11 concentration in the cell, derepression of the target genes and activation of the metabolism. Functionally, DNA-binding protein involved in the repression of transcription of a large number of genes, thereby arresting growth, in response to environmental changes. The chain is HTH-type transcriptional regulator FL11 from Pyrococcus furiosus (strain ATCC 43587 / DSM 3638 / JCM 8422 / Vc1).